The sequence spans 205 residues: High frequency lysogenization protein HflD homolog (205 aa).

Belongs to the HflD family.

It is found in the cytoplasm. It localises to the cell inner membrane. The chain is High frequency lysogenization protein HflD homolog from Vibrio atlanticus (strain LGP32) (Vibrio splendidus (strain Mel32)).